Reading from the N-terminus, the 269-residue chain is Intermembrane phospholipid transport system ATP-binding protein MlaF (269 aa).

In terms of domain architecture, ABC transporter spans 9–245 (VDMRDVSFTR…PDPRVRQFLD (237 aa)). 41–48 (GPSGIGKT) contacts ATP.

Belongs to the ABC transporter superfamily. MlaF family. In terms of assembly, the complex is composed of two ATP-binding proteins (MlaF), two transmembrane proteins (MlaE), two cytoplasmic solute-binding proteins (MlaB) and six periplasmic solute-binding proteins (MlaD).

It localises to the cell inner membrane. Part of the ABC transporter complex MlaFEDB, which is involved in a phospholipid transport pathway that maintains lipid asymmetry in the outer membrane by retrograde trafficking of phospholipids from the outer membrane to the inner membrane. Responsible for energy coupling to the transport system. In Escherichia coli O157:H7, this protein is Intermembrane phospholipid transport system ATP-binding protein MlaF.